The primary structure comprises 84 residues: Toxin To7 (84 aa).

The first 20 residues, 1-20, serve as a signal peptide directing secretion; it reads MSIFPIVLALLLIGLEETEA. Positions 21 to 83 constitute an LCN-type CS-alpha/beta domain; the sequence is LDGYPLSKIN…KMYPGSSPCY (63 aa). 4 disulfide bridges follow: Cys-32-Cys-82, Cys-36-Cys-59, Cys-42-Cys-64, and Cys-46-Cys-66.

In terms of tissue distribution, expressed by the venom gland.

Its subcellular location is the secreted. Its function is as follows. Inhibits voltage-gated sodium channels (Nav). This Tityus obscurus (Amazonian scorpion) protein is Toxin To7.